Reading from the N-terminus, the 435-residue chain is Asparagine--tRNA ligase (435 aa).

This sequence belongs to the class-II aminoacyl-tRNA synthetase family. In terms of assembly, homodimer.

It localises to the cytoplasm. The catalysed reaction is tRNA(Asn) + L-asparagine + ATP = L-asparaginyl-tRNA(Asn) + AMP + diphosphate + H(+). The polypeptide is Asparagine--tRNA ligase (Leptospira interrogans serogroup Icterohaemorrhagiae serovar copenhageni (strain Fiocruz L1-130)).